A 315-amino-acid polypeptide reads, in one-letter code: Protoheme IX farnesyltransferase 1 (315 aa).

Transmembrane regions (helical) follow at residues 30–50 (PGIIISNSLAALGGFWIAWIQ), 56–76 (GGPGIFAAMAVAMIGTALVMA), 106–126 (IPPPVMILYGTCLGACGFIML), 132–152 (LTAVLGLLAFLLYAVVYTLWF), 162–182 (VGSFPGAAPPLIGYCALTGYI), 186–206 (AILLYAIMFLWQPPHFWAIGI), 249–269 (LYIDVSPFYTASALLLGAIWL), and 289–309 (FFYSIVYFSLLFLILMADSFI).

The protein belongs to the UbiA prenyltransferase family. Protoheme IX farnesyltransferase subfamily. In terms of assembly, interacts with CtaA.

It localises to the cell membrane. It carries out the reaction heme b + (2E,6E)-farnesyl diphosphate + H2O = Fe(II)-heme o + diphosphate. It participates in porphyrin-containing compound metabolism; heme O biosynthesis; heme O from protoheme: step 1/1. Its function is as follows. Converts heme B (protoheme IX) to heme O by substitution of the vinyl group on carbon 2 of heme B porphyrin ring with a hydroxyethyl farnesyl side group. This Bacillus velezensis (strain DSM 23117 / BGSC 10A6 / LMG 26770 / FZB42) (Bacillus amyloliquefaciens subsp. plantarum) protein is Protoheme IX farnesyltransferase 1.